The primary structure comprises 254 residues: Small ribosomal subunit protein uS3 (254 aa).

A KH type-2 domain is found at I39–I109. Residues E220–A254 are disordered. Residues E221–G242 are compositionally biased toward basic and acidic residues. Over residues A243–A254 the composition is skewed to basic residues.

It belongs to the universal ribosomal protein uS3 family. As to quaternary structure, part of the 30S ribosomal subunit. Forms a tight complex with proteins S10 and S14.

Binds the lower part of the 30S subunit head. Binds mRNA in the 70S ribosome, positioning it for translation. The sequence is that of Small ribosomal subunit protein uS3 from Chlorobaculum parvum (strain DSM 263 / NCIMB 8327) (Chlorobium vibrioforme subsp. thiosulfatophilum).